The following is a 272-amino-acid chain: METYAVFGNPIAHSKSPFIHQQFAQQLDIVHPYGRVLAPINNFINTLDAFFAAGGKGANITVPFKEEAFARSDELTERASLAGAVNTLKRLEDGRLLGDNTDGIGLLSDLERLNFIRPGLRILLIGAGGASRGVLLPLLSLDCAVTITNRTASRAEALAKIFAHTGSVHATDMDKLDGCEFDLIINATSSGIRGEIPAIPASLIHPSLCCYDMFYQKGNTPFLSWCVQQGAKRYADGLGMLVGQAAHAVLLWHGVLPQVEPVIELLQQELLA.

Shikimate contacts are provided by residues 14 to 16 and T61; that span reads SKS. K65 serves as the catalytic Proton acceptor. E77 is a binding site for NADP(+). Residues N86 and D102 each coordinate shikimate. Residues 126 to 130, 149 to 154, and M213 contribute to the NADP(+) site; these read GAGGA and NRTASR. Y215 is a shikimate binding site. NADP(+) is bound at residue G237.

This sequence belongs to the shikimate dehydrogenase family. In terms of assembly, homodimer.

It catalyses the reaction shikimate + NADP(+) = 3-dehydroshikimate + NADPH + H(+). It participates in metabolic intermediate biosynthesis; chorismate biosynthesis; chorismate from D-erythrose 4-phosphate and phosphoenolpyruvate: step 4/7. Functionally, involved in the biosynthesis of the chorismate, which leads to the biosynthesis of aromatic amino acids. Catalyzes the reversible NADPH linked reduction of 3-dehydroshikimate (DHSA) to yield shikimate (SA). This is Shikimate dehydrogenase (NADP(+)) from Salmonella enteritidis PT4 (strain P125109).